The chain runs to 425 residues: tRNA(Ile)-lysidine synthase (425 aa).

ATP is bound at residue 27 to 32 (SGGLDS).

The protein belongs to the tRNA(Ile)-lysidine synthase family.

Its subcellular location is the cytoplasm. The enzyme catalyses cytidine(34) in tRNA(Ile2) + L-lysine + ATP = lysidine(34) in tRNA(Ile2) + AMP + diphosphate + H(+). Ligates lysine onto the cytidine present at position 34 of the AUA codon-specific tRNA(Ile) that contains the anticodon CAU, in an ATP-dependent manner. Cytidine is converted to lysidine, thus changing the amino acid specificity of the tRNA from methionine to isoleucine. This is tRNA(Ile)-lysidine synthase from Streptococcus pneumoniae (strain Hungary19A-6).